The chain runs to 537 residues: Proline--tRNA ligase (537 aa).

The protein belongs to the class-II aminoacyl-tRNA synthetase family. ProS type 3 subfamily. In terms of assembly, homodimer.

The protein resides in the cytoplasm. It catalyses the reaction tRNA(Pro) + L-proline + ATP = L-prolyl-tRNA(Pro) + AMP + diphosphate. Catalyzes the attachment of proline to tRNA(Pro) in a two-step reaction: proline is first activated by ATP to form Pro-AMP and then transferred to the acceptor end of tRNA(Pro). The protein is Proline--tRNA ligase of Nanoarchaeum equitans (strain Kin4-M).